A 26-amino-acid polypeptide reads, in one-letter code: GLWNKIKEAASKAAGKAALGFVNEMV.

Valine amide is present on Val-26.

The protein belongs to the frog skin active peptide (FSAP) family. Dermaseptin subfamily. Expressed by the skin glands.

It is found in the secreted. In terms of biological role, possesses a potent antimicrobial activity against Gram-positive and Gram-negative bacteria. Probably acts by disturbing membrane functions with its amphipathic structure. In Phyllomedusa bicolor (Two-colored leaf frog), this protein is Dermaseptin-B5.